The chain runs to 171 residues: Regulatory protein RecX (171 aa).

Belongs to the RecX family.

It localises to the cytoplasm. Functionally, modulates RecA activity. The sequence is that of Regulatory protein RecX from Mycobacterium leprae (strain Br4923).